A 737-amino-acid polypeptide reads, in one-letter code: Prospero homeobox protein 1 (737 aa).

Positions 1–28 (MPDHDSTALLSRQTKRRRVDIGVKRTVG) are interaction with RORG. Residues 103–135 (KNGGTEPSFQASGLSSTGSEVHQEDICSNSSRD) are compositionally biased toward polar residues. The interval 103-149 (KNGGTEPSFQASGLSSTGSEVHQEDICSNSSRDSPPECLSPFGRPTM) is disordered. A phosphoserine mark is found at serine 177, serine 179, and serine 199. Positions 178-242 (HSPSVALRGN…REERRQLKQQ (65 aa)) are disordered. Positions 213 to 223 (LPQQQQQSFQQ) are enriched in low complexity. Residues 227 to 242 (ARKEQKREERRQLKQQ) are compositionally biased toward basic and acidic residues. A phosphoserine mark is found at serine 291 and serine 295. Over residues 320 to 337 (MAENKPKREGNNKERDHG) the composition is skewed to basic and acidic residues. 2 disordered regions span residues 320–344 (MAEN…LQPE) and 445–476 (KNSS…TGFT). A Glycyl lysine isopeptide (Lys-Gly) (interchain with G-Cter in SUMO2) cross-link involves residue lysine 324. Residues 464 to 476 (LHQSPLSATTGFT) are compositionally biased toward polar residues. Serine 511, serine 514, and serine 557 each carry phosphoserine. The 59-residue stretch at 577 to 635 (QEGLSPNHLKKAKLMFFYTRYPSSNMLKTYFSDVKFNRCITSQLIKWFSNFREFYYIQM) folds into the Prospero-type homeo domain. Residues 577 to 735 (QEGLSPNHLK…KSPNCLQELL (159 aa)) form a homeo-Prospero region. A Prospero domain is found at 636–735 (EKYARQAIND…KSPNCLQELL (100 aa)). The essential for nuclear localization, interaction with RORG, repression of RORG transcriptional activator activity stretch occupies residues 723-729 (EIFKSPN).

Belongs to the Prospero homeodomain family. In terms of assembly, interacts with RORA and RORG (via AF-2 motif). Most actively expressed in the developing lens. Detected also in embryonic brain, lung, liver and kidney. In adult, it is more abundant in heart and liver than in brain, skeletal muscle, kidney and pancreas.

Its subcellular location is the nucleus. Its function is as follows. Transcription factor involved in developmental processes such as cell fate determination, gene transcriptional regulation and progenitor cell regulation in a number of organs. Plays a critical role in embryonic development and functions as a key regulatory protein in neurogenesis and the development of the heart, eye lens, liver, pancreas and the lymphatic system. Involved in the regulation of the circadian rhythm. Represses: transcription of the retinoid-related orphan receptor RORG, transcriptional activator activity of RORA and RORG and the expression of RORA/G-target genes including core clock components: BMAL1, NPAS2 and CRY1 and metabolic genes: AVPR1A and ELOVL3. The protein is Prospero homeobox protein 1 (PROX1) of Homo sapiens (Human).